A 418-amino-acid chain; its full sequence is MIQQKSPSLLGGAMIIAGTAIGAGMLANPTSTAGVWFIGSILALIYTWFCMTTSGLMILEANLHYPTGSSFDTIVKDLLGKSWNTINGLSVAFVLYILTYAYITSGGGITQNLLNQAFSSAESAVDIGRTSGSLIFCLILAAFVWLSTKAVDRFTTVLIVGMVVAFFLSTTGLLSSVKTAVLFNTVAESEQTYLPYLLTALPVCLVSFGFHGNVPSLVKYYDRDGRRVMKSIFIGTGLALVIYILWQLAVQGNLPRTEFAPVIEKGGDVSALLEALHKYIEVEYLSVALNFFAYMAISTSFLGVTLGLFDYIADLFKFDDSLLGRTKTTLVTFLPPLLLSLQFPYGFVIAIGYAGLAATIWAAIVPALLAKASRQKFPQASYKVYGGNFMIGFVILFGILNIVAQIGANLGWFASFTG.

Helical transmembrane passes span 7 to 27 (PSLLGGAMIIAGTAIGAGMLA), 32 to 52 (TAGVWFIGSILALIYTWFCMT), 89 to 109 (LSVAFVLYILTYAYITSGGGI), 131 to 151 (SGSLIFCLILAAFVWLSTKAV), 154 to 174 (FTTVLIVGMVVAFFLSTTGLL), 194 to 214 (LPYLLTALPVCLVSFGFHGNV), 232 to 252 (IFIGTGLALVIYILWQLAVQG), 289 to 309 (LNFFAYMAISTSFLGVTLGLF), 321 to 343 (SLLGRTKTTLVTFLPPLLLSLQF), 345 to 365 (YGFVIAIGYAGLAATIWAAIV), and 384 to 404 (VYGGNFMIGFVILFGILNIVA).

It belongs to the amino acid/polyamine transporter 2 family. Mtr/TnaB/TyrP permease subfamily.

The protein resides in the cell inner membrane. It carries out the reaction L-tryptophan(in) + H(+)(in) = L-tryptophan(out) + H(+)(out). Involved in the transport of tryptophan into the cell. The polypeptide is Tryptophan-specific transport protein (mtr) (Haemophilus influenzae (strain ATCC 51907 / DSM 11121 / KW20 / Rd)).